The following is a 61-amino-acid chain: Probradykinin-1 (61 aa).

An N-terminal signal peptide occupies residues 1 to 22 (MSFLKKSLFLVLFLGLVSFSIC). Residues 23–48 (EEEKRETEEEENKDETEEQSEEKKRF) constitute a propeptide that is removed on maturation. A disordered region spans residues 24 to 61 (EEKRETEEEENKDETEEQSEEKKRFEPVPPGFTPFRLT). The span at 30-42 (EEEENKDETEEQS) shows a compositional bias: acidic residues.

The protein belongs to the frog skin active peptide (FSAP) family. Bradykinin-related peptide subfamily. As to expression, expressed by the skin glands.

Its subcellular location is the secreted. May produce in vitro relaxation of rat arterial smooth muscle and constriction of intestinal smooth muscle. May target bradykinin receptors (BDKRB). This Pithecopus azureus (Orange-legged monkey tree frog) protein is Probradykinin-1.